The following is a 531-amino-acid chain: Berberine bridge enzyme-like 9 (531 aa).

Positions 1–23 (MTSLTTQTLIITIFLLTIPTSFA) are cleaved as a signal peptide. Residues C35 and C99 are joined by a disulfide bond. N-linked (GlcNAc...) asparagine glycans are attached at residues N76, N164, N271, N300, N314, N400, and N485. The FAD-binding PCMH-type domain occupies 77 to 252 (MTRKPVAIVA…LAWKIKLVPV (176 aa)). Residues 114–177 (HDYDGMSYLS…DLRGFPAGIC (64 aa)) constitute a cross-link (6-(S-cysteinyl)-8alpha-(pros-histidyl)-FAD (His-Cys)).

This sequence belongs to the oxygen-dependent FAD-linked oxidoreductase family. The cofactor is FAD. The FAD cofactor is bound via a bicovalent 6-S-cysteinyl, 8alpha-N1-histidyl FAD linkage. In terms of tissue distribution, accumulates in cell walls of etiolated hypocotyls.

It is found in the secreted. The protein resides in the cell wall. This chain is Berberine bridge enzyme-like 9, found in Arabidopsis thaliana (Mouse-ear cress).